The following is a 160-amino-acid chain: Transcription elongation factor GreA (160 aa).

The stretch at 43–76 (LSENAEYDAAREQQRQLENKIGDLESKLTRATIL) forms a coiled coil.

Belongs to the GreA/GreB family.

Its function is as follows. Necessary for efficient RNA polymerase transcription elongation past template-encoded arresting sites. The arresting sites in DNA have the property of trapping a certain fraction of elongating RNA polymerases that pass through, resulting in locked ternary complexes. Cleavage of the nascent transcript by cleavage factors such as GreA or GreB allows the resumption of elongation from the new 3'terminus. GreA releases sequences of 2 to 3 nucleotides. The chain is Transcription elongation factor GreA from Chlorobium phaeobacteroides (strain BS1).